We begin with the raw amino-acid sequence, 353 residues long: MTAILERRESTSLWGRFCNWITSTENRLYIGWFGVLMIPTLLTATSVFIIAFIAAPPVDIDGIREPVSGSLLYGNNIISGAIIPTSAAIGLHFYPIWEAASVDEWLYNGGPYELIVLHFLLGVACYMGREWELSFRLGMRPWIAVAYSAPVAAATAVFLIYPIGQGSFSDGMPLGISGTFNFMIVFQAEHNILMHPFHMLGVAGVFGGSLFSAMHGSLVTSSLIRETTENESANEGYKFGQEEETYNIVAAHGYFGRLIFQYASFNNSRSLHFFLAAWPVVGIWFTALGISTMAFNLNGFNFNQSVVDSQGRVINTWADIINRANLGMEVMHERNAHNFPLDLAAVEVPSING.

T2 bears the N-acetylthreonine mark. Phosphothreonine is present on T2. 3 helical membrane passes run 29–46, 118–133, and 142–156; these read YIGWFGVLMIPTLLTATS, HFLLGVACYMGREWEL, and WIAVAYSAPVAAATA. H118 serves as a coordination point for chlorophyll a. Pheophytin a is bound at residue Y126. [CaMn4O5] cluster-binding residues include D170 and E189. The chain crosses the membrane as a helical span at residues 197 to 218; sequence FHMLGVAGVFGGSLFSAMHGSL. H198 is a binding site for chlorophyll a. Residues H215 and 264–265 each bind a quinone; that span reads SF. Residue H215 participates in Fe cation binding. H272 is a binding site for Fe cation. The helical transmembrane segment at 274–288 threads the bilayer; sequence FLAAWPVVGIWFTAL. Residues H332, E333, D342, and A344 each contribute to the [CaMn4O5] cluster site. The propeptide occupies 345–353; it reads AVEVPSING.

This sequence belongs to the reaction center PufL/M/PsbA/D family. PSII is composed of 1 copy each of membrane proteins PsbA, PsbB, PsbC, PsbD, PsbE, PsbF, PsbH, PsbI, PsbJ, PsbK, PsbL, PsbM, PsbT, PsbX, PsbY, PsbZ, Psb30/Ycf12, at least 3 peripheral proteins of the oxygen-evolving complex and a large number of cofactors. It forms dimeric complexes. The D1/D2 heterodimer binds P680, chlorophylls that are the primary electron donor of PSII, and subsequent electron acceptors. It shares a non-heme iron and each subunit binds pheophytin, quinone, additional chlorophylls, carotenoids and lipids. D1 provides most of the ligands for the Mn4-Ca-O5 cluster of the oxygen-evolving complex (OEC). There is also a Cl(-1) ion associated with D1 and D2, which is required for oxygen evolution. The PSII complex binds additional chlorophylls, carotenoids and specific lipids. serves as cofactor. In terms of processing, tyr-161 forms a radical intermediate that is referred to as redox-active TyrZ, YZ or Y-Z. Post-translationally, C-terminally processed by CTPA; processing is essential to allow assembly of the oxygen-evolving complex and thus photosynthetic growth.

It localises to the plastid. It is found in the chloroplast thylakoid membrane. It catalyses the reaction 2 a plastoquinone + 4 hnu + 2 H2O = 2 a plastoquinol + O2. Its function is as follows. Photosystem II (PSII) is a light-driven water:plastoquinone oxidoreductase that uses light energy to abstract electrons from H(2)O, generating O(2) and a proton gradient subsequently used for ATP formation. It consists of a core antenna complex that captures photons, and an electron transfer chain that converts photonic excitation into a charge separation. The D1/D2 (PsbA/PsbD) reaction center heterodimer binds P680, the primary electron donor of PSII as well as several subsequent electron acceptors. The chain is Photosystem II protein D1 from Triticum aestivum (Wheat).